The primary structure comprises 343 residues: Heat-inducible transcription repressor HrcA (343 aa).

Belongs to the HrcA family.

Negative regulator of class I heat shock genes (grpE-dnaK-dnaJ and groELS operons). Prevents heat-shock induction of these operons. The chain is Heat-inducible transcription repressor HrcA from Clostridium botulinum (strain Alaska E43 / Type E3).